A 283-amino-acid polypeptide reads, in one-letter code: Polyamine aminopropyltransferase (283 aa).

The PABS domain occupies 5–238; that stretch reads QTWIDEYHKG…GIWSWTFASS (234 aa). An S-methyl-5'-thioadenosine-binding site is contributed by glutamine 32. Spermidine-binding residues include histidine 63 and aspartate 87. Residues glutamate 107 and 139–140 each bind S-methyl-5'-thioadenosine; that span reads DG. Catalysis depends on aspartate 158, which acts as the Proton acceptor. 158–161 serves as a coordination point for spermidine; it reads DCSD.

This sequence belongs to the spermidine/spermine synthase family. In terms of assembly, homodimer or homotetramer.

The protein localises to the cytoplasm. The catalysed reaction is S-adenosyl 3-(methylsulfanyl)propylamine + putrescine = S-methyl-5'-thioadenosine + spermidine + H(+). It participates in amine and polyamine biosynthesis; spermidine biosynthesis; spermidine from putrescine: step 1/1. Catalyzes the irreversible transfer of a propylamine group from the amino donor S-adenosylmethioninamine (decarboxy-AdoMet) to putrescine (1,4-diaminobutane) to yield spermidine. The sequence is that of Polyamine aminopropyltransferase from Prochlorococcus marinus (strain MIT 9301).